A 303-amino-acid chain; its full sequence is Probable cat1 operon transcriptional activator (303 aa).

The HTH lysR-type domain maps to 1 to 58 (MDLRQFRYFVAVARERNFTRAARQLNIAQPPLSRQIQLLEEEVGVPLLIRNSRPVQLT). Residues 18-37 (FTRAARQLNIAQPPLSRQIQ) constitute a DNA-binding region (H-T-H motif).

Belongs to the LysR transcriptional regulatory family.

Functionally, probable positive regulator of the cat1 operon which encode enzymes responsible for the degradation of catechol to acetyl-CoA via the beta-ketoadipate pathway. The chain is Probable cat1 operon transcriptional activator from Acinetobacter lwoffii.